Consider the following 278-residue polypeptide: HTH-type transcriptional activator RhaS (278 aa).

Residues asparagine 174–glycine 272 enclose the HTH araC/xylS-type domain. 2 consecutive DNA-binding regions (H-T-H motif) follow at residues aspartate 191–threonine 212 and valine 239–phenylalanine 262.

Binds DNA as a dimer.

Its subcellular location is the cytoplasm. Its function is as follows. Activates expression of the rhaBAD and rhaT operons. In Shigella boydii serotype 18 (strain CDC 3083-94 / BS512), this protein is HTH-type transcriptional activator RhaS.